The chain runs to 335 residues: Holliday junction branch migration complex subunit RuvB (335 aa).

A large ATPase domain (RuvB-L) region spans residues 1–183 (MDERIISSET…FGVIDHLEFY (183 aa)). ATP-binding positions include Leu22, Arg23, Gly64, Lys67, Thr68, Thr69, 130–132 (EDY), Arg173, Tyr183, and Arg220. Thr68 serves as a coordination point for Mg(2+). The interval 184–254 (TEEQLTEIVL…LAKEALTLLQ (71 aa)) is small ATPAse domain (RuvB-S). A head domain (RuvB-H) region spans residues 257 to 335 (PRGLDTIDQK…HLGISYEKEV (79 aa)). Residues Arg293, Arg312, and Arg317 each contribute to the DNA site.

This sequence belongs to the RuvB family. Homohexamer. Forms an RuvA(8)-RuvB(12)-Holliday junction (HJ) complex. HJ DNA is sandwiched between 2 RuvA tetramers; dsDNA enters through RuvA and exits via RuvB. An RuvB hexamer assembles on each DNA strand where it exits the tetramer. Each RuvB hexamer is contacted by two RuvA subunits (via domain III) on 2 adjacent RuvB subunits; this complex drives branch migration. In the full resolvosome a probable DNA-RuvA(4)-RuvB(12)-RuvC(2) complex forms which resolves the HJ.

It is found in the cytoplasm. It carries out the reaction ATP + H2O = ADP + phosphate + H(+). Its function is as follows. The RuvA-RuvB-RuvC complex processes Holliday junction (HJ) DNA during genetic recombination and DNA repair, while the RuvA-RuvB complex plays an important role in the rescue of blocked DNA replication forks via replication fork reversal (RFR). RuvA specifically binds to HJ cruciform DNA, conferring on it an open structure. The RuvB hexamer acts as an ATP-dependent pump, pulling dsDNA into and through the RuvAB complex. RuvB forms 2 homohexamers on either side of HJ DNA bound by 1 or 2 RuvA tetramers; 4 subunits per hexamer contact DNA at a time. Coordinated motions by a converter formed by DNA-disengaged RuvB subunits stimulates ATP hydrolysis and nucleotide exchange. Immobilization of the converter enables RuvB to convert the ATP-contained energy into a lever motion, pulling 2 nucleotides of DNA out of the RuvA tetramer per ATP hydrolyzed, thus driving DNA branch migration. The RuvB motors rotate together with the DNA substrate, which together with the progressing nucleotide cycle form the mechanistic basis for DNA recombination by continuous HJ branch migration. Branch migration allows RuvC to scan DNA until it finds its consensus sequence, where it cleaves and resolves cruciform DNA. In Listeria innocua serovar 6a (strain ATCC BAA-680 / CLIP 11262), this protein is Holliday junction branch migration complex subunit RuvB.